A 546-amino-acid polypeptide reads, in one-letter code: Probable zinc metalloprotease EGY2, chloroplastic (546 aa).

A chloroplast-targeting transit peptide spans 1–64 (MQLPAMSCSP…QIRNRRFVCQ (64 aa)). A disordered region spans residues 67–143 (TETEPDGDGN…DATPASDAQE (77 aa)). Over residues 69-86 (TEPDGDGNGDEEKEELGD) the composition is skewed to acidic residues. Polar residues-rich tracts occupy residues 89–110 (SSPSVDSVTQENGSAESETNAD) and 118–130 (NTEPLSSSDTVQN). Helical transmembrane passes span 257-277 (AVPEWFAAASFGVVTIFTLLL), 301-321 (VYGALVTAAIIGVHEIAHILA), 326-346 (GIKLAVPYFVPSWQIGSFGAI), 364-384 (AAGPLAGFSLGFVLLLLGFIL), 427-447 (PLVLWAWAGLLINAINSIPAG), 474-494 (LLGISALFNDVAFYWVVLIFF), and 514-534 (YISIGVAILLFGLLVCLPYPF).

The protein belongs to the peptidase M50B family.

It localises to the plastid. The protein localises to the chloroplast membrane. In terms of biological role, probable membrane-associated metalloprotease that may be involved in chloroplast development. The polypeptide is Probable zinc metalloprotease EGY2, chloroplastic (EGY2) (Oryza sativa subsp. japonica (Rice)).